We begin with the raw amino-acid sequence, 447 residues long: UDP-glycosyltransferase 79B10 (447 aa).

UDP-alpha-D-glucose is bound by residues serine 260, valine 319 to glutamine 321, histidine 336 to glutamate 344, and leucine 358 to glutamine 361.

It belongs to the UDP-glycosyltransferase family.

The sequence is that of UDP-glycosyltransferase 79B10 (UGT79B10) from Arabidopsis thaliana (Mouse-ear cress).